The chain runs to 660 residues: UvrABC system protein B (660 aa).

Residues 24–177 form the Helicase ATP-binding domain; that stretch reads KGFKEGNQFE…DDLARALIDL (154 aa). ATP is bound at residue 37-44; it reads GVTGSGKT. The Beta-hairpin motif lies at 90–113; that stretch reads YYDYYQPEAYVPQSDTYIAKDSSV. Positions 428-594 constitute a Helicase C-terminal domain; that stretch reads QIDDLVSEVN…TIQKSVRDLI (167 aa). Residues 620-655 enclose the UVR domain; it reads EKHIADIEKKMKKAAAELNFEAAAEYRDKLIMLKNT.

Belongs to the UvrB family. As to quaternary structure, forms a heterotetramer with UvrA during the search for lesions. Interacts with UvrC in an incision complex.

The protein localises to the cytoplasm. The UvrABC repair system catalyzes the recognition and processing of DNA lesions. A damage recognition complex composed of 2 UvrA and 2 UvrB subunits scans DNA for abnormalities. Upon binding of the UvrA(2)B(2) complex to a putative damaged site, the DNA wraps around one UvrB monomer. DNA wrap is dependent on ATP binding by UvrB and probably causes local melting of the DNA helix, facilitating insertion of UvrB beta-hairpin between the DNA strands. Then UvrB probes one DNA strand for the presence of a lesion. If a lesion is found the UvrA subunits dissociate and the UvrB-DNA preincision complex is formed. This complex is subsequently bound by UvrC and the second UvrB is released. If no lesion is found, the DNA wraps around the other UvrB subunit that will check the other stand for damage. This chain is UvrABC system protein B, found in Agathobacter rectalis (strain ATCC 33656 / DSM 3377 / JCM 17463 / KCTC 5835 / VPI 0990) (Eubacterium rectale).